The chain runs to 97 residues: uncharacterized protein (97 aa).

The disordered stretch occupies residues I27–D50.

This is an uncharacterized protein from Caldicellulosiruptor saccharolyticus (Caldocellum saccharolyticum).